The sequence spans 275 residues: ORF3a protein (275 aa).

The interval 1–39 (MDLFMRIFTIGTVTLKQGEIKDATPSDFVRATATIPIQA) is disordered. Topologically, residues 1 to 42 (MDLFMRIFTIGTVTLKQGEIKDATPSDFVRATATIPIQASLP) are extracellular. O-linked (GalNAc...) threonine; by host glycans are attached at residues Thr32 and Thr34. The CoV 3a-like viroporin TM domain maps to 33 to 141 (ATIPIQASLP…KCRSKNPLLY (109 aa)). The chain crosses the membrane as a helical span at residues 43-61 (FGWLIVGVALLAVFQSASK). Topologically, residues 62 to 67 (IITLKK) are cytoplasmic. Residues 68 to 93 (RWQLALSKGVHFVCNLLLLFVTVYSH) traverse the membrane as a helical segment. At 94–101 (LLLVAAGL) the chain is on the extracellular side. The chain crosses the membrane as a helical span at residues 102–126 (EAPFLYLYALVYFLQSINFVRIIMR). Residues 127-275 (LWLCWKCRSK…EPTTTTSVPL (149 aa)) lie on the Cytoplasmic side of the membrane. A CoV 3a-like viroporin CD domain is found at 145–237 (YFLCWHTNCY…VTFFIYNKIV (93 aa)). A disordered region spans residues 239 to 275 (EPEEHVQIHTIDGSSGVVNPVMEPIYDEPTTTTSVPL).

Homodimer, a subset forms homotetramer of two homodimers linked non covalently. Interacts with M, S and E proteins. Also interacts with the accessory protein 7a. Interacts with host VPS39, sequestering it on late endosomes. Interacts with host HMGB1; the interaction enhances the association between HMGB1 and host BECN1, promoting reticulophagy. Interacts with HMOX1; the interaction promotes ORF3A-induced autophagy but is unlikely to be involved in ORF3A-mediated induction of reticulophagy. Exists in both O-glycosylated and non-glycosylated forms. The glycosylated form is associated with the virion.

It is found in the virion. The protein resides in the host cell membrane. It localises to the host endoplasmic reticulum membrane. Its subcellular location is the secreted. The protein localises to the host cytoplasm. It is found in the host endosome. The protein resides in the host lysosome. Plays a role in viral egress via lysosomal trafficking. Forms homotetrameric ion channels (viroporins) localized at endosomes and lysosomes, that may induce deacidification of lysosomes, allowing safe egress of virions via lysosomal trafficking. Also blocks autolysosome formation by binding and sequestering the host component VPS39 for homotypic fusion and protein sorting (HOPS) on late endosomes. This prevents fusion of autophagosomes with lysosomes, disrupting autophagy and facilitating virus egress. Induces host RETREG1/FAM134B-dependent reticulophagy by interacting with host HMGB1 and enhancing the association between HMGB1 and host BECN1. This induces endoplasmic reticulum stress and inflammatory responses and facilitates viral infection. The sequence is that of ORF3a protein from Severe acute respiratory syndrome coronavirus 2 (2019-nCoV).